The chain runs to 284 residues: Nucleotide-binding protein PputGB1_0956 (284 aa).

8–15 (GRSGSGKS) provides a ligand contact to ATP. 60-63 (DARN) contacts GTP.

This sequence belongs to the RapZ-like family.

In terms of biological role, displays ATPase and GTPase activities. The polypeptide is Nucleotide-binding protein PputGB1_0956 (Pseudomonas putida (strain GB-1)).